The chain runs to 73 residues: Small ribosomal subunit protein bS18 (73 aa).

Belongs to the bacterial ribosomal protein bS18 family. In terms of assembly, part of the 30S ribosomal subunit. Forms a tight heterodimer with protein bS6.

Binds as a heterodimer with protein bS6 to the central domain of the 16S rRNA, where it helps stabilize the platform of the 30S subunit. This Prochlorococcus marinus (strain NATL2A) protein is Small ribosomal subunit protein bS18.